The chain runs to 148 residues: Large ribosomal subunit protein uL15A (148 aa).

Basic residues-rich tracts occupy residues 1–13 (MPTH…KLRG) and 21–31 (RIGKHRKHPGG). The disordered stretch occupies residues 1–36 (MPTHVSKTRKLRGHVSAGHGRIGKHRKHPGGRGKAG).

Belongs to the universal ribosomal protein uL15 family. Component of the large ribosomal subunit (LSU). Mature yeast ribosomes consist of a small (40S) and a large (60S) subunit. The 40S small subunit contains 1 molecule of ribosomal RNA (18S rRNA) and at least 33 different proteins. The large 60S subunit contains 3 rRNA molecules (25S, 5.8S and 5S rRNA) and at least 46 different proteins.

The protein resides in the cytoplasm. Functionally, component of the ribosome, a large ribonucleoprotein complex responsible for the synthesis of proteins in the cell. The small ribosomal subunit (SSU) binds messenger RNAs (mRNAs) and translates the encoded message by selecting cognate aminoacyl-transfer RNA (tRNA) molecules. The large subunit (LSU) contains the ribosomal catalytic site termed the peptidyl transferase center (PTC), which catalyzes the formation of peptide bonds, thereby polymerizing the amino acids delivered by tRNAs into a polypeptide chain. The nascent polypeptides leave the ribosome through a tunnel in the LSU and interact with protein factors that function in enzymatic processing, targeting, and the membrane insertion of nascent chains at the exit of the ribosomal tunnel. In Schizosaccharomyces pombe (strain 972 / ATCC 24843) (Fission yeast), this protein is Large ribosomal subunit protein uL15A (rpl2802).